The primary structure comprises 181 residues: ATP synthase subunit delta (181 aa).

It belongs to the ATPase delta chain family. As to quaternary structure, F-type ATPases have 2 components, F(1) - the catalytic core - and F(0) - the membrane proton channel. F(1) has five subunits: alpha(3), beta(3), gamma(1), delta(1), epsilon(1). F(0) has three main subunits: a(1), b(2) and c(10-14). The alpha and beta chains form an alternating ring which encloses part of the gamma chain. F(1) is attached to F(0) by a central stalk formed by the gamma and epsilon chains, while a peripheral stalk is formed by the delta and b chains.

It localises to the cell inner membrane. F(1)F(0) ATP synthase produces ATP from ADP in the presence of a proton or sodium gradient. F-type ATPases consist of two structural domains, F(1) containing the extramembraneous catalytic core and F(0) containing the membrane proton channel, linked together by a central stalk and a peripheral stalk. During catalysis, ATP synthesis in the catalytic domain of F(1) is coupled via a rotary mechanism of the central stalk subunits to proton translocation. Its function is as follows. This protein is part of the stalk that links CF(0) to CF(1). It either transmits conformational changes from CF(0) to CF(1) or is implicated in proton conduction. This is ATP synthase subunit delta from Mannheimia succiniciproducens (strain KCTC 0769BP / MBEL55E).